A 453-amino-acid chain; its full sequence is MSRKYFGTDGVRGKVGTFPITPDFVMRLGYAAGRVLTRMDHHLVPGTKPLVIIGKDTRISGYMFETALVSGLCAGGVNVRITGPLPTPAIAHVTRAQRAQAGIVISASHNPFDDNGIKFFSAQGTKLPDEVELAIEAELDQPMELVPTEQIGRVKRIDDAAGRYIEFCKSTFPNALDLRGLKIVLDCANGATYHVAPPVFHELGAEVISIGTQPNGLNINLNVGSTHPESLQQAVVEHQADLGIAFDGDGDRVVMADNQGQLLDGDQLLYIIASHRHQRGRLGGGVVGTLMTNLALEHALGKEGIPFQRAKVGDRYVLELLNANEWQLGGENSGHILCLDKHSSGDGIIAALQVLHALRASGLSLADWAKRLPLYPQVLINVKVAQRIDLDSNTALQAAVTSAEGALKGTGRVLLRASGTEPKIRVMVEGQDRPLVQRLAEEIAAVVQQEAAS.

The Phosphoserine intermediate role is filled by Ser108. Mg(2+) is bound by residues Ser108, Asp247, Asp249, and Asp251. At Ser108 the chain carries Phosphoserine.

It belongs to the phosphohexose mutase family. The cofactor is Mg(2+). In terms of processing, activated by phosphorylation.

The catalysed reaction is alpha-D-glucosamine 1-phosphate = D-glucosamine 6-phosphate. Catalyzes the conversion of glucosamine-6-phosphate to glucosamine-1-phosphate. The sequence is that of Phosphoglucosamine mutase from Methylobacillus flagellatus (strain ATCC 51484 / DSM 6875 / VKM B-1610 / KT).